The following is a 281-amino-acid chain: AB hydrolase superfamily protein YclE (281 aa).

The AB hydrolase-1 domain occupies 30-268 (SAVYYPRLFS…SGHQPMLEEP (239 aa)). Serine 95 (nucleophile) is an active-site residue. The active site involves aspartate 232. Residue histidine 261 is the Proton donor of the active site.

It belongs to the AB hydrolase superfamily.

The protein is AB hydrolase superfamily protein YclE (yclE) of Bacillus subtilis (strain 168).